The sequence spans 290 residues: Acetyl-coenzyme A carboxylase carboxyl transferase subunit beta (290 aa).

Residues 27–290 (LWHKCPSCEA…FTHSPSPVSA (264 aa)) enclose the CoA carboxyltransferase N-terminal domain. The Zn(2+) site is built by Cys31, Cys34, Cys50, and Cys53. The C4-type zinc-finger motif lies at 31–53 (CPSCEAVLYRPELEKTLDVCPKC).

The protein belongs to the AccD/PCCB family. As to quaternary structure, acetyl-CoA carboxylase is a heterohexamer composed of biotin carboxyl carrier protein (AccB), biotin carboxylase (AccC) and two subunits each of ACCase subunit alpha (AccA) and ACCase subunit beta (AccD). Zn(2+) is required as a cofactor.

The protein localises to the cytoplasm. It catalyses the reaction N(6)-carboxybiotinyl-L-lysyl-[protein] + acetyl-CoA = N(6)-biotinyl-L-lysyl-[protein] + malonyl-CoA. The protein operates within lipid metabolism; malonyl-CoA biosynthesis; malonyl-CoA from acetyl-CoA: step 1/1. Functionally, component of the acetyl coenzyme A carboxylase (ACC) complex. Biotin carboxylase (BC) catalyzes the carboxylation of biotin on its carrier protein (BCCP) and then the CO(2) group is transferred by the transcarboxylase to acetyl-CoA to form malonyl-CoA. The chain is Acetyl-coenzyme A carboxylase carboxyl transferase subunit beta from Pseudomonas aeruginosa (strain UCBPP-PA14).